A 314-amino-acid chain; its full sequence is Diisopropyl-fluorophosphatase (314 aa).

Positions 21, 120, 175, 229, 232, 273, and 274 each coordinate Ca(2+). The active-site Proton acceptor is His287.

Monomer. Ca(2+) serves as cofactor.

It catalyses the reaction diisopropyl fluorophosphate + H2O = diisopropyl phosphate + fluoride + 2 H(+). Its activity is regulated as follows. Inhibited by chelating agents. Biological function and substrate unknown. However, it is capable of acting on phosphorus anhydride bonds (such as phosphorus-halide and phosphorus-cyanide) in organophosphorus compounds (including nerve gases). In Loligo vulgaris (Common European squid), this protein is Diisopropyl-fluorophosphatase.